We begin with the raw amino-acid sequence, 398 residues long: Acetylornithine aminotransferase (398 aa).

Pyridoxal 5'-phosphate contacts are provided by residues 105 to 106 and phenylalanine 138; that span reads GA. Arginine 141 provides a ligand contact to N(2)-acetyl-L-ornithine. A pyridoxal 5'-phosphate-binding site is contributed by 223 to 226; it reads DEVQ. At lysine 252 the chain carries N6-(pyridoxal phosphate)lysine. Threonine 280 provides a ligand contact to N(2)-acetyl-L-ornithine. Threonine 281 contributes to the pyridoxal 5'-phosphate binding site.

It belongs to the class-III pyridoxal-phosphate-dependent aminotransferase family. ArgD subfamily. In terms of assembly, homodimer. Requires pyridoxal 5'-phosphate as cofactor.

It is found in the cytoplasm. It carries out the reaction N(2)-acetyl-L-ornithine + 2-oxoglutarate = N-acetyl-L-glutamate 5-semialdehyde + L-glutamate. It participates in amino-acid biosynthesis; L-arginine biosynthesis; N(2)-acetyl-L-ornithine from L-glutamate: step 4/4. In Methanocaldococcus jannaschii (strain ATCC 43067 / DSM 2661 / JAL-1 / JCM 10045 / NBRC 100440) (Methanococcus jannaschii), this protein is Acetylornithine aminotransferase.